Consider the following 349-residue polypeptide: Magnesium-protoporphyrin IX monomethyl ester [oxidative] cyclase (349 aa).

Residues 1-10 (MTATTATAPA) show a composition bias toward low complexity. The segment at 1-23 (MTATTATAPAMRGGGRNELPPHL) is disordered.

This sequence belongs to the AcsF family. It depends on Fe cation as a cofactor.

The enzyme catalyses Mg-protoporphyrin IX 13-monomethyl ester + 3 NADPH + 3 O2 + 2 H(+) = 3,8-divinyl protochlorophyllide a + 3 NADP(+) + 5 H2O. Its pathway is porphyrin-containing compound metabolism; chlorophyll biosynthesis (light-independent). In terms of biological role, catalyzes the formation of the isocyclic ring in chlorophyll biosynthesis. Mediates the cyclase reaction, which results in the formation of divinylprotochlorophyllide (Pchlide) characteristic of all chlorophylls from magnesium-protoporphyrin IX 13-monomethyl ester (MgPMME). The sequence is that of Magnesium-protoporphyrin IX monomethyl ester [oxidative] cyclase from Prochlorococcus marinus (strain MIT 9303).